An 82-amino-acid polypeptide reads, in one-letter code: RNA-binding protein Hfq (82 aa).

The Sm domain occupies 11–71; the sequence is DTFLNHVRKT…ISTIMPGAPI (61 aa).

This sequence belongs to the Hfq family. As to quaternary structure, homohexamer.

Its function is as follows. RNA chaperone that binds small regulatory RNA (sRNAs) and mRNAs to facilitate mRNA translational regulation in response to envelope stress, environmental stress and changes in metabolite concentrations. Also binds with high specificity to tRNAs. This chain is RNA-binding protein Hfq, found in Bradyrhizobium sp. (strain BTAi1 / ATCC BAA-1182).